Consider the following 230-residue polypeptide: Mitochondrial fission factor homolog B (230 aa).

The Cytoplasmic portion of the chain corresponds to 1–210 (MSGAAFPSPT…ENKERAKREM (210 aa)). The disordered stretch occupies residues 117–153 (EQTSSVSHPSEEVRTQTKTRRERSVSENAGVHHNGPL). Serine 142 bears the Phosphoserine mark. Residues 179–210 (VDATSLRRQIVKLNRRLQLLEEENKERAKREM) are a coiled coil. The chain crosses the membrane as a helical; Anchor for type IV membrane protein span at residues 211-228 (VMYSITVAFWLVNSWVWF). At 229–230 (RR) the chain is on the extracellular side.

The protein belongs to the Tango11 family.

The protein resides in the mitochondrion outer membrane. The protein localises to the peroxisome. Its function is as follows. Plays a role in mitochondrial and peroxisomal fission. Promotes the recruitment and association of the fission mediator dynamin-related protein 1 (DNM1L) to the mitochondrial surface. The chain is Mitochondrial fission factor homolog B from Danio rerio (Zebrafish).